Reading from the N-terminus, the 184-residue chain is Peptide deformylase (184 aa).

2 residues coordinate Fe cation: Cys96 and His138. The active site involves Glu139. Residue His142 coordinates Fe cation.

The protein belongs to the polypeptide deformylase family. Requires Fe(2+) as cofactor.

The enzyme catalyses N-terminal N-formyl-L-methionyl-[peptide] + H2O = N-terminal L-methionyl-[peptide] + formate. In terms of biological role, removes the formyl group from the N-terminal Met of newly synthesized proteins. Requires at least a dipeptide for an efficient rate of reaction. N-terminal L-methionine is a prerequisite for activity but the enzyme has broad specificity at other positions. The chain is Peptide deformylase from Cytophaga hutchinsonii (strain ATCC 33406 / DSM 1761 / CIP 103989 / NBRC 15051 / NCIMB 9469 / D465).